The following is a 245-amino-acid chain: High affinity immunoglobulin epsilon receptor subunit alpha (245 aa).

The signal sequence occupies residues 1–23 (MDTGGSARLCLALVLISLGVMLT). The Extracellular portion of the chain corresponds to 24 to 204 (ATQKSVVSLD…DYTIEYRWLQ (181 aa)). 2 Ig-like domains span residues 28-103 (SVVS…KPVY) and 113-181 (LQSS…LNKV). An intrachain disulfide couples C49 to C91. 7 N-linked (GlcNAc...) asparagine glycosylation sites follow: N52, N53, N58, N65, N123, N158, and N167. C130 and C174 are oxidised to a cystine. Residues 205-223 (LIFPSLAVILFAVDTGLWF) traverse the membrane as a helical segment. The Cytoplasmic segment spans residues 224–245 (STHKQFESILKIQKTGKGKKKG).

Tetramer of an alpha chain, a beta chain, and two disulfide linked gamma chains. Interacts with IGHE (via CH3 region). Expressed in leukocytes and pinealocytes at night (at protein level).

The protein localises to the cell membrane. The protein resides in the secreted. High-affinity receptor for immunoglobulin epsilon/IgE. Mediates IgE effector functions in myeloid cells. Upon IgE binding and antigen/allergen cross-linking initiates signaling pathways that lead to myeloid cell activation and differentiation. On mast cells, basophils and eosinophils stimulates the secretion of vasoactive amines, lipid mediators and cytokines that contribute to inflammatory response, tissue remodeling and cytotoxicity against microbes. Triggers the immediate hypersensitivity response to allergens as a host defense mechanism against helminth parasites, pathogenic bacteria and venom toxicity. When dysregulated, it can elicit harmful life-threatening allergic and anaphylactic reactions. This Rattus norvegicus (Rat) protein is High affinity immunoglobulin epsilon receptor subunit alpha (Fcer1a).